The following is a 197-amino-acid chain: Ribosome maturation factor RimM (197 aa).

The PRC barrel domain maps to 99 to 174; it reads EDEFYQVDLI…LVVEPVAAGL (76 aa).

The protein belongs to the RimM family. Binds ribosomal protein uS19.

The protein localises to the cytoplasm. Functionally, an accessory protein needed during the final step in the assembly of 30S ribosomal subunit, possibly for assembly of the head region. Essential for efficient processing of 16S rRNA. May be needed both before and after RbfA during the maturation of 16S rRNA. It has affinity for free ribosomal 30S subunits but not for 70S ribosomes. In Bartonella quintana (strain Toulouse) (Rochalimaea quintana), this protein is Ribosome maturation factor RimM.